Here is a 116-residue protein sequence, read N- to C-terminus: Large ribosomal subunit protein bL17 (116 aa).

It belongs to the bacterial ribosomal protein bL17 family. In terms of assembly, part of the 50S ribosomal subunit. Contacts protein L32.

The chain is Large ribosomal subunit protein bL17 from Prochlorococcus marinus (strain MIT 9303).